The following is a 314-amino-acid chain: Olfactory receptor 14A2 (314 aa).

Over 1-26 (MANVTLVTGFLLMGFSNIQKLRILYG) the chain is Extracellular. Residue Asn3 is glycosylated (N-linked (GlcNAc...) asparagine). Residues 27–47 (VLFLLIYLAALMSNLLIITLI) traverse the membrane as a helical segment. Topologically, residues 48–55 (TLDVKLQT) are cytoplasmic. A helical membrane pass occupies residues 56-76 (PMYFFLKNLSFLDVFLVSVPI). At 77–91 (PKFIVNNLTHNNSIS) the chain is on the extracellular side. The N-linked (GlcNAc...) asparagine glycan is linked to Asn83. A helical membrane pass occupies residues 92–112 (ILGCAFQLLLMTSFSAGEIFI). Cys95 and Cys177 are disulfide-bonded. Residues 113 to 136 (LTAMSYDRYVAICCPLNYEVIMNT) are Cytoplasmic-facing. Residues 137-157 (GVCVLMASVSWAIGGLFGTAY) form a helical membrane-spanning segment. The Extracellular portion of the chain corresponds to 158-193 (TAGTFSMPFCGSSVIPQFFCDVPSLLRISCSETLMV). Residues 194 to 214 (IYAGIGVGACLSISCFICIVI) form a helical membrane-spanning segment. The Cytoplasmic segment spans residues 215 to 237 (SYIYIFSTVLKIPTTKGQSKAFS). Residues 238–258 (TCFPHLTVFTVFIITAYFVYL) form a helical membrane-spanning segment. Residues 259-267 (KPPSNSPSV) lie on the Extracellular side of the membrane. Residues 268 to 290 (IDRLLSVIYTVMPPVFNPVTYSL) traverse the membrane as a helical segment. Residues 291 to 314 (RNNDMKCALIRLLQKTYGQEAYFI) are Cytoplasmic-facing.

This sequence belongs to the G-protein coupled receptor 1 family.

The protein localises to the cell membrane. Odorant receptor. In Homo sapiens (Human), this protein is Olfactory receptor 14A2 (OR14A2).